We begin with the raw amino-acid sequence, 181 residues long: Achaete-scute homolog 3 (181 aa).

The interval 93–106 (AFTRKRNERERQRV) is basic motif. A bHLH domain is found at 93 to 145 (AFTRKRNERERQRVKCVNEGYAQLRHHLPEEYLEKRLSKVETLRAAIKYINYL). Residues 107–145 (KCVNEGYAQLRHHLPEEYLEKRLSKVETLRAAIKYINYL) are helix-loop-helix motif.

As to quaternary structure, efficient DNA binding requires dimerization with another bHLH protein. As to expression, widely expressed in fetal and adult tissues.

It localises to the nucleus. In terms of biological role, transcriptional repressor. Inhibits myogenesis. Plays a role in progenitor cells which differentiate into ductal and acinar, but not myoepithelial, cell lineages in the salivary glands. Involved in the functions of the microvillar cells and Bowman's glands and probably, in a non-cell-autonomous manner, in the development or regeneration of a complete olfactory epithelium (OE). This is Achaete-scute homolog 3 from Homo sapiens (Human).